Reading from the N-terminus, the 173-residue chain is Alpha-crystallin A chain (173 aa).

Residue Met1 is modified to N-acetylmethionine. The required for complex formation with BFSP1 and BFSP2 stretch occupies residues 1–63 (MDVTIQHPWF…RTVLDSGISE (63 aa)). Gln6 bears the Deamidated glutamine; partial mark. At Ser45 the chain carries Phosphoserine. Gln50 carries the deamidated glutamine; partial modification. Residues 52 to 162 (LFRTVLDSGI…GPSERAIPVS (111 aa)) form the sHSP domain. N6-acetyllysine occurs at positions 70 and 99. The Zn(2+) site is built by His100, Glu102, and His107. Residues 145 to 173 (KVASGLDAGPSERAIPVSREEKPSSAPSS) form a disordered region. Ser162 carries an O-linked (GlcNAc) serine glycan.

It belongs to the small heat shock protein (HSP20) family. Heteromer composed of three CRYAA and one CRYAB subunits. Zinc coordination is achieved at least by His-100, Glu-102 and His-107. His-100 and Glu-102 come from the same molecule within the oligomer, while His-107 residue is provided by another molecule. Inter-subunit bridging via zinc ions enhances stability, which is crucial as there is no protein turn over in the lens. Can also form homodimers and homotetramers (dimers of dimers) which serve as the building blocks of homooligomers. Part of a complex required for lens intermediate filament formation composed of BFSP1, BFSP2 and CRYAA. Post-translationally, acetylation at Lys-70 may increase chaperone activity. In terms of processing, undergoes age-dependent proteolytical cleavage at the C-terminus.

The protein resides in the cytoplasm. It is found in the nucleus. Functionally, contributes to the transparency and refractive index of the lens. Acts as a chaperone, preventing aggregation of various proteins under a wide range of stress conditions. Required for the correct formation of lens intermediate filaments as part of a complex composed of BFSP1, BFSP2 and CRYAA. In Erinaceus europaeus (Western European hedgehog), this protein is Alpha-crystallin A chain (CRYAA).